Consider the following 499-residue polypeptide: ATP synthase subunit alpha, chloroplastic (499 aa).

170 to 177 (GDRQTGKT) contributes to the ATP binding site.

The protein belongs to the ATPase alpha/beta chains family. In terms of assembly, F-type ATPases have 2 components, CF(1) - the catalytic core - and CF(0) - the membrane proton channel. CF(1) has five subunits: alpha(3), beta(3), gamma(1), delta(1), epsilon(1). CF(0) has four main subunits: a, b, b' and c.

The protein localises to the plastid. Its subcellular location is the chloroplast thylakoid membrane. It carries out the reaction ATP + H2O + 4 H(+)(in) = ADP + phosphate + 5 H(+)(out). Functionally, produces ATP from ADP in the presence of a proton gradient across the membrane. The alpha chain is a regulatory subunit. The polypeptide is ATP synthase subunit alpha, chloroplastic (Emiliania huxleyi (Coccolithophore)).